The following is a 401-amino-acid chain: Subtilisin-like protease 7 (401 aa).

The first 20 residues, 1–20 (MGFITKAIPLALAAASVING), serve as a signal peptide directing secretion. Positions 21-119 (AEILETRAGV…IERDARVQIN (99 aa)) are excised as a propeptide. Residues 36 to 118 (KYIVVMNDGM…YIERDARVQI (83 aa)) enclose the Inhibitor I9 domain. An N-linked (GlcNAc...) asparagine glycan is attached at Asn58. Residues 129 to 401 (SWGLARVGSR…SKLINNGSGM (273 aa)) enclose the Peptidase S8 domain. Catalysis depends on charge relay system residues Asp161 and His193. N-linked (GlcNAc...) asparagine glycosylation is found at Asn223 and Asn253. The active-site Charge relay system is Ser347. An N-linked (GlcNAc...) asparagine glycan is attached at Asn397.

The protein belongs to the peptidase S8 family.

The protein localises to the secreted. Functionally, secreted subtilisin-like serine protease with keratinolytic activity that contributes to pathogenicity. The polypeptide is Subtilisin-like protease 7 (SUB7) (Trichophyton equinum (Horse ringworm fungus)).